Here is a 594-residue protein sequence, read N- to C-terminus: TOX high mobility group box family member 4-B (594 aa).

Disordered stretches follow at residues 160–225 (GTIL…PQKP) and 522–545 (ESPPPQMDVELVSSSPPPSLSPQC). Basic residues predominate over residues 207 to 217 (KPKTPKKKKKK). Residues 212–217 (KKKKKK) carry the Nuclear localization signal motif. Positions 222–290 (PQKPLSAYAL…EYLKALALYK (69 aa)) form a DNA-binding region, HMG box.

In terms of assembly, component of the PNUTS-PP1 phosphatase complex.

The protein resides in the nucleus. It localises to the chromosome. Its function is as follows. Transcription factor that modulates cell fate reprogramming from the somatic state to the pluripotent and neuronal fate. Also acts as a regulatory component of protein phosphatase 1 (PP1) complexes. Component of the PNUTS-PP1 protein phosphatase complex, a PP1 complex that regulates RNA polymerase II transcription pause-release. PNUTS-PP1 also plays a role in the control of chromatin structure and cell cycle progression during the transition from mitosis into interphase. The protein is TOX high mobility group box family member 4-B (tox4-b) of Xenopus laevis (African clawed frog).